A 550-amino-acid polypeptide reads, in one-letter code: Arginine--tRNA ligase (550 aa).

Residues A124–H134 carry the 'HIGH' region motif.

It belongs to the class-I aminoacyl-tRNA synthetase family. In terms of assembly, monomer.

It is found in the cytoplasm. It catalyses the reaction tRNA(Arg) + L-arginine + ATP = L-arginyl-tRNA(Arg) + AMP + diphosphate. The sequence is that of Arginine--tRNA ligase from Desulfovibrio desulfuricans (strain ATCC 27774 / DSM 6949 / MB).